The sequence spans 97 residues: Co-chaperonin GroES (97 aa).

The protein belongs to the GroES chaperonin family. Heptamer of 7 subunits arranged in a ring. Interacts with the chaperonin GroEL.

The protein localises to the cytoplasm. Together with the chaperonin GroEL, plays an essential role in assisting protein folding. The GroEL-GroES system forms a nano-cage that allows encapsulation of the non-native substrate proteins and provides a physical environment optimized to promote and accelerate protein folding. GroES binds to the apical surface of the GroEL ring, thereby capping the opening of the GroEL channel. This Burkholderia cepacia (Pseudomonas cepacia) protein is Co-chaperonin GroES.